Here is a 191-residue protein sequence, read N- to C-terminus: Small ribosomal subunit protein uS5 (191 aa).

The region spanning 21 to 84 (FADRLVAINR…EQAKRQMIRV (64 aa)) is the S5 DRBM domain. Positions 155–191 (LRKESSPRSVAQRRGKKVADILPKVDAAPAPAETAEA) are disordered. A compositionally biased stretch (low complexity) spans 181 to 191 (AAPAPAETAEA).

The protein belongs to the universal ribosomal protein uS5 family. As to quaternary structure, part of the 30S ribosomal subunit. Contacts proteins S4 and S8.

In terms of biological role, with S4 and S12 plays an important role in translational accuracy. Functionally, located at the back of the 30S subunit body where it stabilizes the conformation of the head with respect to the body. This chain is Small ribosomal subunit protein uS5, found in Roseobacter denitrificans (strain ATCC 33942 / OCh 114) (Erythrobacter sp. (strain OCh 114)).